We begin with the raw amino-acid sequence, 67 residues long: Bowman-Birk type proteinase inhibitor 1 (67 aa).

Intrachain disulfides connect Cys5-Cys59, Cys6-Cys21, Cys9-Cys55, Cys11-Cys19, Cys29-Cys36, Cys33-Cys48, and Cys38-Cys46.

This sequence belongs to the Bowman-Birk serine protease inhibitor family. In terms of assembly, monomer. Although dimerization may occur in solution. In terms of tissue distribution, seed.

Inhibits trypsin but not chymotrypsin. The inhibitor consists of 2 domains and has 2 sites of interaction with trypsin. The polypeptide is Bowman-Birk type proteinase inhibitor 1 (Dioclea glabra).